Here is a 232-residue protein sequence, read N- to C-terminus: Caffeoyl-CoA O-methyltransferase (232 aa).

Substrate is bound at residue lysine 6. S-adenosyl-L-methionine is bound by residues threonine 48, glutamate 70, 72–73 (GV), serine 78, aspartate 96, and alanine 125. Aspartate 148 contacts substrate. Aspartate 148 contributes to the a divalent metal cation binding site. Aspartate 150 lines the S-adenosyl-L-methionine pocket. The a divalent metal cation site is built by aspartate 174 and asparagine 175. Residue asparagine 179 participates in substrate binding.

It belongs to the class I-like SAM-binding methyltransferase superfamily. Cation-dependent O-methyltransferase family. CCoAMT subfamily. Requires a divalent metal cation as cofactor.

The catalysed reaction is (E)-caffeoyl-CoA + S-adenosyl-L-methionine = (E)-feruloyl-CoA + S-adenosyl-L-homocysteine + H(+). It functions in the pathway aromatic compound metabolism; phenylpropanoid biosynthesis. Functionally, methylates caffeoyl-CoA to feruloyl-CoA and 5-hydroxyferuloyl-CoA to sinapoyl-CoA. Plays a role in the synthesis of feruloylated polysaccharides. Involved in the reinforcement of the plant cell wall. Also involved in the responding to wounding or pathogen challenge by the increased formation of cell wall-bound ferulic acid polymers. The polypeptide is Caffeoyl-CoA O-methyltransferase (Citrus natsudaidai (Natsudaidai orange)).